The sequence spans 1868 residues: Proteasome component ECM29 (1868 aa).

S2 is modified (N-acetylserine). 22 HEAT repeats span residues T32–T69, Q116–A153, P256–N292, P313–E351, D384–Q422, V439–I476, P590–I627, S707–N745, A748–A780, E781–S818, Q846–N885, T945–H982, S988–S1025, S1030–P1067, Q1137–L1174, L1178–Q1215, E1272–G1311, V1361–G1398, P1422–L1459, N1503–G1540, L1544–D1581, and K1649–S1687. Phosphoserine is present on S1692. HEAT repeat units lie at residues R1746–I1785 and G1830–G1867.

This sequence belongs to the ECM29 family. In terms of assembly, component of the proteasome. ECM29 binds to both proteasome 19S and 20S particles.

The protein resides in the cytoplasm. Its subcellular location is the nucleus. Functionally, stabilizes the proteasome holoenzyme, probably by tethering the 20S proteolytic core particle and the 19S regulatory particle. The proteasome is a multicatalytic proteinase complex which is characterized by its ability to cleave peptides with Arg, Phe, Tyr, Leu, and Glu adjacent to the leaving group at neutral or slightly basic pH. The proteasome has an ATP-dependent proteolytic activity. The polypeptide is Proteasome component ECM29 (ECM29) (Saccharomyces cerevisiae (strain ATCC 204508 / S288c) (Baker's yeast)).